A 499-amino-acid polypeptide reads, in one-letter code: Hexokinase-2, chloroplastic (499 aa).

The N-terminal 30 residues, 1-30 (MSVTVSSPAGRSFHISRSPYKKISKPRVII), are a transit peptide targeting the chloroplast. One can recognise a Hexokinase domain in the interval 39–490 (LAVAPILTKL…SGIGAALLAA (452 aa)). The tract at residues 94 to 232 (TGNEKGLFYA…GLGMQVSALV (139 aa)) is hexokinase small subdomain. ADP is bound by residues glycine 108, threonine 109, and asparagine 110. Threonine 198, lysine 199, asparagine 233, and aspartate 234 together coordinate D-glucose. The hexokinase large subdomain stretch occupies residues 233-479 (NDTVATLAGA…KNVVIEHSKD (247 aa)). Residue threonine 257 coordinates ADP. D-glucose contacts are provided by asparagine 260, glutamate 288, and glutamate 318. Position 444 (glycine 444) interacts with ADP.

This sequence belongs to the hexokinase family. Expressed in vascular starch sheath, xylem parenchyma, guard cells and root tips.

It is found in the plastid. Its subcellular location is the chloroplast stroma. The catalysed reaction is a D-hexose + ATP = a D-hexose 6-phosphate + ADP + H(+). It catalyses the reaction D-fructose + ATP = D-fructose 6-phosphate + ADP + H(+). It carries out the reaction D-glucose + ATP = D-glucose 6-phosphate + ADP + H(+). It participates in carbohydrate metabolism; hexose metabolism. It functions in the pathway carbohydrate degradation; glycolysis; D-glyceraldehyde 3-phosphate and glycerone phosphate from D-glucose: step 1/4. Its function is as follows. Fructose and glucose phosphorylating enzyme. This chain is Hexokinase-2, chloroplastic (HXK2), found in Nicotiana tabacum (Common tobacco).